Consider the following 271-residue polypeptide: MSRVGVLVLGPAGAGKSTFCNGIISYMQSVGRRAHIVNLDPAAEASEYEFTVDIRDLISLDDVMEELSLGPNGSLVYCFEYLLENLDWLDEEIGDYNDEYLIFDCPGQIELYTHIPVLPTIVRHLQNQLNFNLCASYLLEAPFVIDTSKFFSGALSAMSAMILLELPHINVLSKVDLIKDEYSKKRLKRFLNPDPMLLVDSANADTNSKFHQLNKAIANLVDDFGMVQFLPLEAKNPDSVSTILSYIDDITQWGEAQEPKEPNDALEIEDM.

A GTP-binding site is contributed by 13–18; sequence GAGKST. Residues 70–72 carry the Gly-Pro-Asn (GPN)-loop; involved in dimer interface motif; that stretch reads GPN. 173-176 is a binding site for GTP; that stretch reads SKVD.

It belongs to the GPN-loop GTPase family. Heterodimers with GPN1 or GPN2. Binds to RNA polymerase II (RNAPII).

Its function is as follows. Small GTPase required for proper nuclear import of RNA polymerase II and III (RNAPII and RNAPIII). May act at an RNAP assembly step prior to nuclear import. This chain is GPN-loop GTPase 3, found in Eremothecium gossypii (strain ATCC 10895 / CBS 109.51 / FGSC 9923 / NRRL Y-1056) (Yeast).